The chain runs to 3685 residues: Dystrophin (3685 aa).

An actin-binding region spans residues 1–240 (MLWWEEVEDC…YITSLFQVLP (240 aa)). Calponin-homology (CH) domains follow at residues 15 to 119 (DVQK…LHWQ) and 134 to 240 (TNSE…QVLP). The interval 63–72 (PKEKGSTRVH) is ANK2- and ANK-3 binding. Spectrin repeat units lie at residues 339 to 447 (VNLD…NLHR), 448 to 556 (VLMD…LLQD), 559 to 667 (LKWQ…QISQ), 719 to 828 (EIRK…WLEY), 830 to 934 (NNII…ELQT), 943 to 1045 (RYQE…KLEE), 1048 to 1154 (NKLR…ALKG), 1157 to 1263 (EKTV…TLEE), 1266 to 1367 (ACWH…LLEQ), 1368 to 1463 (SIQS…LFQK), 1468 to 1568 (EQRL…QLEK), 1571 to 1676 (KLSR…LLLE), 1679 to 1778 (KHME…KASI), 1779 to 1874 (PLKE…KALE), 1877 to 1979 (HQWY…TVRE), 1992 to 2101 (EISY…RFDR), 2104 to 2208 (EKWR…RLEE), 2211 to 2318 (NILS…EIEA), 2319 to 2423 (QIKD…LRAK), 2475 to 2577 (FNRA…QLNE), 2580 to 2686 (KDST…ALEE), 2689 to 2802 (RLLQ…HLEA), 2808 to 2930 (KRLH…RKID), and 2935 to 3040 (RLRE…QLHE). N340 carries the phosphothreonine modification. Y344 and L348 each carry phosphoserine. E519, S616, and S629 each carry phosphothreonine. Residues 1415–1913 (SDLTSHEISL…PEPRDERKIK (499 aa)) form an interaction with SYNM region. The region spanning 3055–3088 (TSVQGPWERAISPNKVPYYINHETQTTCWDHPKM) is the WW domain. The tract at residues 3058 to 3408 (QGPWERAISP…TVLEGDNMET (351 aa)) is interaction with SYNM. Residues 3308–3364 (KHQAKCNICKECPIIGFRYRSLKHFNYDICQSCFFSGRVAKGHKMHYPMVEYCTPTT) form a ZZ-type; degenerate zinc finger. C3313, C3316, C3337, and C3340 together coordinate Zn(2+). Residues 3466–3518 (DDEHLLIQHYCQSLNQDSPLSQPRSPAQILISLESEERGELERILADLEEENR) are binds to SNTB1. Phosphoserine occurs at positions 3483, 3490, and 3500. Disordered stretches follow at residues 3528–3554 (KQQH…QSPR) and 3603–3685 (EAKV…EDTM). 2 stretches are compositionally biased toward polar residues: residues 3607–3626 (NGTT…SSQP) and 3662–3673 (QLNNSFPSSRGR). A phosphoserine mark is found at S3612, S3613, S3617, S3623, S3624, and S3666.

In terms of assembly, interacts with SYNM. Interacts with the syntrophins SNTA1, SNTB1, SNTB2, SNTG1 and SNTG2. Interacts with KRT19. Component of the dystrophin-associated glycoprotein complex which is composed of three subcomplexes: a cytoplasmic complex comprised of DMD (or UTRN), DTNA and a number of syntrophins, such as SNTB1, SNTB2, SNTG1 and SNTG2, the transmembrane dystroglycan complex, and the sarcoglycan-sarcospan complex. Interacts with DAG1 (betaDAG1) with DMD; the interaction is inhibited by phosphorylation on the PPXY motif of DAG1. Interacts with CMYA5. Directly interacts with ANK2 and ANK3; these interactions do not interfere with betaDAG1-binding and are necessary for proper localization in muscle cells. Identified in a dystroglycan complex that contains at least PRX, DRP2, UTRN, DMD and DAG1. Interacts with DTNB. Interacts with PGM5; the interaction is direct. Interacts with NOS1; localizes NOS1 to sarcolemma in muscle cells. Expressed in muscle fibers accumulating in the costameres of myoplasm at the sarcolemma. Expressed in brain, muscle, kidney, lung and testis. Most tissues contain transcripts of multiple isoforms. Isoform 15: Only isoform to be detected in heart and liver and is also expressed in brain, testis and hepatoma cells.

The protein localises to the cell membrane. Its subcellular location is the sarcolemma. It is found in the cytoplasm. The protein resides in the cytoskeleton. It localises to the postsynaptic cell membrane. Functionally, anchors the extracellular matrix to the cytoskeleton via F-actin. Ligand for dystroglycan. Component of the dystrophin-associated glycoprotein complex which accumulates at the neuromuscular junction (NMJ) and at a variety of synapses in the peripheral and central nervous systems and has a structural function in stabilizing the sarcolemma. Also implicated in signaling events and synaptic transmission. The polypeptide is Dystrophin (Homo sapiens (Human)).